A 285-amino-acid polypeptide reads, in one-letter code: Diaminopimelate epimerase (285 aa).

Substrate-binding residues include N14 and N67. C76 acts as the Proton donor in catalysis. Substrate-binding positions include 77–78 (GN), N166, N199, and 217–218 (ER). C226 acts as the Proton acceptor in catalysis. 227–228 (GT) is a binding site for substrate.

Belongs to the diaminopimelate epimerase family. In terms of assembly, homodimer.

Its subcellular location is the cytoplasm. The catalysed reaction is (2S,6S)-2,6-diaminopimelate = meso-2,6-diaminopimelate. The protein operates within amino-acid biosynthesis; L-lysine biosynthesis via DAP pathway; DL-2,6-diaminopimelate from LL-2,6-diaminopimelate: step 1/1. Catalyzes the stereoinversion of LL-2,6-diaminopimelate (L,L-DAP) to meso-diaminopimelate (meso-DAP), a precursor of L-lysine and an essential component of the bacterial peptidoglycan. In Bacillus licheniformis (strain ATCC 14580 / DSM 13 / JCM 2505 / CCUG 7422 / NBRC 12200 / NCIMB 9375 / NCTC 10341 / NRRL NRS-1264 / Gibson 46), this protein is Diaminopimelate epimerase.